The chain runs to 161 residues: Transcriptional regulator MraZ (161 aa).

2 consecutive SpoVT-AbrB domains span residues 7–69 (KELH…EPDV) and 98–141 (LDVV…EPER).

The protein belongs to the MraZ family. Forms oligomers.

The protein resides in the cytoplasm. It localises to the nucleoid. This Chlorobium limicola (strain DSM 245 / NBRC 103803 / 6330) protein is Transcriptional regulator MraZ.